The following is a 178-amino-acid chain: Large ribosomal subunit protein bL25 (178 aa).

It belongs to the bacterial ribosomal protein bL25 family. CTC subfamily. In terms of assembly, part of the 50S ribosomal subunit; part of the 5S rRNA/L5/L18/L25 subcomplex. Contacts the 5S rRNA. Binds to the 5S rRNA independently of L5 and L18.

Functionally, this is one of the proteins that binds to the 5S RNA in the ribosome where it forms part of the central protuberance. The chain is Large ribosomal subunit protein bL25 from Wolinella succinogenes (strain ATCC 29543 / DSM 1740 / CCUG 13145 / JCM 31913 / LMG 7466 / NCTC 11488 / FDC 602W) (Vibrio succinogenes).